The chain runs to 446 residues: Glutamine synthetase (446 aa).

A GS beta-grasp domain is found at 15–103 (ENVKFLRLQI…LICDVYYPDG (89 aa)). A GS catalytic domain is found at 110–446 (PRYVLKRQIE…WELDRYLATY (337 aa)). Positions 134 and 136 each coordinate Mg(2+). Glu-186 contributes to the ATP binding site. Glu-191 and Glu-198 together coordinate Mg(2+). L-glutamate contacts are provided by residues 242–243 (NG) and Gly-243. Residue His-247 participates in Mg(2+) binding. Residue Ser-251 coordinates ATP. The L-glutamate site is built by Arg-300, Glu-306, and Arg-318. ATP is bound by residues Arg-318 and Arg-323. Mg(2+) is bound at residue Glu-335. Arg-337 provides a ligand contact to L-glutamate.

Belongs to the glutamine synthetase family. In terms of assembly, interacts with GCBP (TTHA1554). Requires Mg(2+) as cofactor.

The protein localises to the cytoplasm. It catalyses the reaction L-glutamate + NH4(+) + ATP = L-glutamine + ADP + phosphate + H(+). Activity increases by approximately two-fold in the presence of GCBP. Its function is as follows. Catalyzes the ATP-dependent biosynthesis of glutamine from glutamate and ammonia. The sequence is that of Glutamine synthetase from Thermus thermophilus (strain ATCC 27634 / DSM 579 / HB8).